Reading from the N-terminus, the 286-residue chain is uncharacterized protein (286 aa).

One can recognise an AB hydrolase-1 domain in the interval 26 to 268 (PLIILCHGFC…DACHYDIYEG (243 aa)).

It belongs to the AB hydrolase superfamily.

This is an uncharacterized protein from Escherichia coli.